A 672-amino-acid chain; its full sequence is Beta-galactosidase GanA (672 aa).

Arg-105 is a substrate binding site. Cys-109 lines the Zn(2+) pocket. Asn-143 provides a ligand contact to substrate. Catalysis depends on Glu-144, which acts as the Proton donor. Positions 149, 151, and 154 each coordinate Zn(2+). Catalysis depends on Glu-308, which acts as the Nucleophile. Substrate contacts are provided by residues Trp-316 and Glu-356–His-359.

The protein belongs to the glycosyl hydrolase 42 family. As to quaternary structure, homotrimer.

The enzyme catalyses Hydrolysis of terminal non-reducing beta-D-galactose residues in beta-D-galactosides.. Its activity is regulated as follows. Inhibited by zinc, cobalt and copper ions. In terms of biological role, involved in galactan degradation. Hydrolyzes galactooligosaccharides released by the endo-beta-1,4-galactanase GanB from galactan. Degrades galactotetraose, galactotriose and galactobiose, generating galactose as the end product. It is unable to use lactose. In vitro, shows maximal activity with o-nitrophenyl-beta-D-galactopyranoside (ONPG) and p-nitrophenyl-beta-D-galactopyranoside (PNPG) as substrates, trace activity with p-nitrophenyl-alpha-L-arabinopyranoside and o-nitrophenyl-beta-D-fucopyranoside as substrates, but no activity with p-nitrophenyl-alpha-D-galactopyranoside, p-nitrophenyl-beta-D-glucopyranoside, o-nitrophenyl-beta-D-xylopyranoside, p-nitrophenyl-beta-D-mannopyranoside or p-nitrophenyl-alpha-L-arabinofuranoside as substrates. This chain is Beta-galactosidase GanA, found in Bacillus subtilis (strain 168).